The chain runs to 367 residues: Anthranilate phosphoribosyltransferase (367 aa).

5-phospho-alpha-D-ribose 1-diphosphate-binding positions include G105, 108–109 (GD), T113, 115–118 (NIST), 133–141 (KHGNRAASS), and G145. G105 lines the anthranilate pocket. S117 serves as a coordination point for Mg(2+). N136 lines the anthranilate pocket. R191 contacts anthranilate. Mg(2+) is bound by residues D249 and E250.

The protein belongs to the anthranilate phosphoribosyltransferase family. As to quaternary structure, homodimer. Requires Mg(2+) as cofactor.

The enzyme catalyses N-(5-phospho-beta-D-ribosyl)anthranilate + diphosphate = 5-phospho-alpha-D-ribose 1-diphosphate + anthranilate. It participates in amino-acid biosynthesis; L-tryptophan biosynthesis; L-tryptophan from chorismate: step 2/5. In terms of biological role, catalyzes the transfer of the phosphoribosyl group of 5-phosphorylribose-1-pyrophosphate (PRPP) to anthranilate to yield N-(5'-phosphoribosyl)-anthranilate (PRA). In Corynebacterium jeikeium (strain K411), this protein is Anthranilate phosphoribosyltransferase.